Reading from the N-terminus, the 351-residue chain is Very-long-chain 3-oxoacyl-CoA reductase (351 aa).

Residues 26–46 (LLWCAFTVGAVKLTTFMLSLI) form a helical membrane-spanning segment. The NADP(+) site is built by leucine 72, aspartate 126, asparagine 153, tyrosine 225, lysine 229, valine 258, and serine 260. Residue tyrosine 225 is the Proton donor of the active site. Lysine 229 serves as the catalytic Lowers pKa of active site Tyr.

This sequence belongs to the short-chain dehydrogenases/reductases (SDR) family.

The protein resides in the endoplasmic reticulum membrane. The enzyme catalyses a very-long-chain (3R)-3-hydroxyacyl-CoA + NADP(+) = a very-long-chain 3-oxoacyl-CoA + NADPH + H(+). The protein operates within lipid metabolism; fatty acid biosynthesis. Component of the microsomal membrane bound fatty acid elongation system, which produces the 26-carbon very long-chain fatty acids (VLCFA) from palmitate. Catalyzes the reduction of the 3-ketoacyl-CoA intermediate that is formed in each cycle of fatty acid elongation. VLCFAs serve as precursors for ceramide and sphingolipids. The protein is Very-long-chain 3-oxoacyl-CoA reductase of Eremothecium gossypii (strain ATCC 10895 / CBS 109.51 / FGSC 9923 / NRRL Y-1056) (Yeast).